Here is a 320-residue protein sequence, read N- to C-terminus: Malate dehydrogenase (320 aa).

NAD(+) contacts are provided by residues 10 to 15 (GAGQIG) and D34. The substrate site is built by R83 and R89. NAD(+) is bound by residues N96 and 119–121 (ITN). Positions 121 and 152 each coordinate substrate. H176 (proton acceptor) is an active-site residue.

The protein belongs to the LDH/MDH superfamily. MDH type 3 family.

The catalysed reaction is (S)-malate + NAD(+) = oxaloacetate + NADH + H(+). Catalyzes the reversible oxidation of malate to oxaloacetate. This chain is Malate dehydrogenase, found in Methylobacterium sp. (strain 4-46).